The chain runs to 523 residues: Cryptochrome DASH (523 aa).

Positions 6 to 142 constitute a Photolyase/cryptochrome alpha/beta domain; the sequence is RVIICLLRND…KYQTFWGSTL (137 aa). 2 disordered regions span residues 174–211 and 486–523; these read RPTF…TDPR and KPAG…NKDV. Residues 496-510 show a composition bias toward basic residues; the sequence is RRGKGPSHTPKQHKN.

This sequence belongs to the DNA photolyase class-1 family. Requires FAD as cofactor. The cofactor is (6R)-5,10-methylene-5,6,7,8-tetrahydrofolate.

Functionally, may have a photoreceptor function. Has weak cyclobutyl pyrimidine photolyase activity when expressed in E.coli and when tested in vitro. The polypeptide is Cryptochrome DASH (cry-dash) (Xenopus laevis (African clawed frog)).